We begin with the raw amino-acid sequence, 922 residues long: MVRRTGWGGSRRQRGRWGDLGPSSVPLLPMALPLPASPCRGTGGRRISVFSLSPAPRTRSCSSSVFPPASGSPCLVIQEAGASQTPHNVLPTPTTPSTQAHPTMIHTSASPSWGSHSTPPLASATPPPSCPRPQDHPGLRMGPLIPEQDYERLEDCDPEGSQDSPIHGEDHQPLLHVPEGLRGSWHHIQNLDSFFTKIYSYHQRNGFACILLEDVFQLGQFIFIVTFTTFLLRCVDYNVLFNNQPKNHTRRGPLHSKVTLSDAILPSAQCAEKIHDSPLLVFLLVLAAGFWLFQLLRSVCNLFSYWDIQVFYREALHIPPEELSSVPWAEVQSRLLELQRSGGLCVQPRPLTELDVHHRILRYTNYQVALANKGLLPARCPLPWGSSAAFLSRGLALNVDLLLFRGPFSLFRGGWELPEAYKRSDLRGVLANRWRRTVLLLAAVNLALSPLVLAWQVLHAFYSHVELLRREPGAFGARRWSRLARLQLRHFNELPHELRARLGRAYRPAAAFLRAAEPPAPLRALLARQLVFFSGALFAALLVLTIYDEDVLAVEHVLTTMTALGVTATVARSFIPEEQCQGRSSQLLLQAALAHMHYLPEEPGATGARASSYWQMAQLLQYRAVSLLEELLSPLLTPLFLLFWFRPRALEIIDFFHHFTVDVAGVGDICSFALMDVKRHGHPQWLSEGQTEASLSQRAEDGKTELSLMRFSLAHPQWQPPGHSSKFLGHLRGRVQQDAAAWGAPSTRSPPTPGVLSDCTSPLPEAFLANLLVNPRPPQRDLSPTAPCPAAATASLLASISRMVQDPSCVSPGGTGGQKLTQLPELVSAEMSLHAIYLHQLHQQQQQELWGEASASSPSRPWSSPSQPGSPDEEKPSWSSDGSSPASSPRQQWGTQRAQNLFPKGFQENTDTQKEPLTGPLH.

2 disordered regions span residues 1–22 (MVRR…DLGP) and 85–144 (TPHN…MGPL). Over 1–206 (MVRRTGWGGS…KIYSYHQRNG (206 aa)) the chain is Cytoplasmic. The span at 85–114 (TPHNVLPTPTTPSTQAHPTMIHTSASPSWG) shows a compositional bias: polar residues. A compositionally biased stretch (low complexity) spans 115 to 124 (SHSTPPLASA). Positions 150-153 (YERL) match the Tyrosine-based sorting signal motif. A helical transmembrane segment spans residues 207 to 227 (FACILLEDVFQLGQFIFIVTF). Residues 228–275 (TTFLLRCVDYNVLFNNQPKNHTRRGPLHSKVTLSDAILPSAQCAEKIH) lie on the Lumenal side of the membrane. Residues 276 to 296 (DSPLLVFLLVLAAGFWLFQLL) traverse the membrane as a helical segment. The Cytoplasmic portion of the chain corresponds to 297-437 (RSVCNLFSYW…GVLANRWRRT (141 aa)). The stretch at 438–458 (VLLLAAVNLALSPLVLAWQVL) is an intramembrane region. At 459–523 (HAFYSHVELL…RAAEPPAPLR (65 aa)) the chain is on the cytoplasmic side. The helical transmembrane segment at 524–544 (ALLARQLVFFSGALFAALLVL) threads the bilayer. Residues 545–550 (TIYDED) lie on the Lumenal side of the membrane. Residues 551–571 (VLAVEHVLTTMTALGVTATVA) traverse the membrane as a helical segment. The Cytoplasmic segment spans residues 572 to 624 (RSFIPEEQCQGRSSQLLLQAALAHMHYLPEEPGATGARASSYWQMAQLLQYRA). The stretch at 625–645 (VSLLEELLSPLLTPLFLLFWF) is an intramembrane region. Over 646–922 (RPRALEIIDF…QKEPLTGPLH (277 aa)) the chain is Cytoplasmic. Residues 848-922 (ELWGEASASS…QKEPLTGPLH (75 aa)) are disordered. 2 stretches are compositionally biased toward low complexity: residues 854 to 870 (SASS…QPGS) and 877 to 889 (SWSS…ASSP). Over residues 890 to 899 (RQQWGTQRAQ) the composition is skewed to polar residues.

Belongs to the ATG9 family. Homotrimer; forms a homotrimer with a central pore that forms a path between the two membrane leaflets. In terms of tissue distribution, expressed in heart, brain, and placenta and testis.

Its subcellular location is the preautophagosomal structure membrane. It catalyses the reaction a 1,2-diacyl-sn-glycero-3-phosphocholine(in) = a 1,2-diacyl-sn-glycero-3-phosphocholine(out). The catalysed reaction is a 1,2-diacyl-sn-glycero-3-phospho-L-serine(in) = a 1,2-diacyl-sn-glycero-3-phospho-L-serine(out). It carries out the reaction a 1,2-diacyl-sn-glycero-3-phosphoethanolamine(in) = a 1,2-diacyl-sn-glycero-3-phosphoethanolamine(out). In terms of biological role, phospholipid scramblase involved in autophagy by mediating autophagosomal membrane expansion. Cycles between the preautophagosomal structure/phagophore assembly site (PAS) and the cytoplasmic vesicle pool and supplies membrane for the growing autophagosome. Lipid scramblase activity plays a key role in preautophagosomal structure/phagophore assembly by distributing the phospholipids that arrive through ATG2 (ATG2A or ATG2B) from the cytoplasmic to the luminal leaflet of the bilayer, thereby driving autophagosomal membrane expansion. In addition to autophagy, also plays a role in necrotic cell death. This is Autophagy-related protein 9B from Mus musculus (Mouse).